The primary structure comprises 341 residues: GTP 3',8-cyclase (341 aa).

Positions 11–231 constitute a Radical SAM core domain; that stretch reads KRERPLRDLR…DLINQHMPTE (221 aa). Arg-20 contributes to the GTP binding site. [4Fe-4S] cluster-binding residues include Cys-27 and Cys-31. Tyr-33 contributes to the S-adenosyl-L-methionine binding site. Residue Cys-34 coordinates [4Fe-4S] cluster. Arg-75 is a GTP binding site. Gly-79 is a binding site for S-adenosyl-L-methionine. Residue Thr-106 coordinates GTP. Position 130 (Ser-130) interacts with S-adenosyl-L-methionine. Position 167 (Lys-167) interacts with GTP. Met-201 is an S-adenosyl-L-methionine binding site. 2 residues coordinate [4Fe-4S] cluster: Cys-265 and Cys-268. 270–272 contributes to the GTP binding site; the sequence is RAR. A [4Fe-4S] cluster-binding site is contributed by Cys-282.

This sequence belongs to the radical SAM superfamily. MoaA family. In terms of assembly, monomer and homodimer. It depends on [4Fe-4S] cluster as a cofactor.

It catalyses the reaction GTP + AH2 + S-adenosyl-L-methionine = (8S)-3',8-cyclo-7,8-dihydroguanosine 5'-triphosphate + 5'-deoxyadenosine + L-methionine + A + H(+). The protein operates within cofactor biosynthesis; molybdopterin biosynthesis. Catalyzes the cyclization of GTP to (8S)-3',8-cyclo-7,8-dihydroguanosine 5'-triphosphate. The sequence is that of GTP 3',8-cyclase from Bacillus velezensis (strain DSM 23117 / BGSC 10A6 / LMG 26770 / FZB42) (Bacillus amyloliquefaciens subsp. plantarum).